The primary structure comprises 445 residues: Histone acetyltransferase of the MYST family 1 (445 aa).

The Tudor-knot domain maps to 60-118 (LEVGTRVMCQWRDGKYHPVKVIERRKNYNGGHNDYEYYVHYTEFNRRLDEWIKLEQLDL). The MYST-type HAT domain maps to 169-440 (TKVKNIATIE…VDVSKMIWTP (272 aa)). The segment at 202 to 227 (LFFCEFCLSFMKRKEQLQRHMRKCDL) adopts a C2HC MYST-type zinc-finger fold. Lysine 269 carries the post-translational modification N6-acetyllysine; by autocatalysis. Acetyl-CoA is bound by residues 312 to 314 (ILT) and 319 to 325 (QRKGYGK). Glutamate 345 serves as the catalytic Proton donor/acceptor. Serine 349 serves as a coordination point for acetyl-CoA.

It belongs to the MYST (SAS/MOZ) family. In terms of assembly, interacts with MRG1 and MRG2. Component of the NuA4 histone acetyltransferase complex. Post-translationally, autoacetylation at Lys-269 is required for proper function. In terms of tissue distribution, expressed in cotyledons, leaves, stems, roots and, at higher levels in developing flowers, particularly in the anthers and gynoecia. Constitutively expressed in all tissues, predominantly in shoot apical meristem.

It localises to the nucleus. It catalyses the reaction L-lysyl-[protein] + acetyl-CoA = N(6)-acetyl-L-lysyl-[protein] + CoA + H(+). Functionally, histone acetyltransferase which may be involved in transcriptional activation. Acetylates 'Lys-5' of histone H4 (H4K5ac). Essential for gametophyte development. Involved in DNA repair after UV-B exposure. Negative regulator of flowering controlling the H4K5ac levels in the FLC chromatin. This is Histone acetyltransferase of the MYST family 1 from Arabidopsis thaliana (Mouse-ear cress).